The sequence spans 316 residues: GTP cyclohydrolase FolE2 1 (316 aa).

This sequence belongs to the GTP cyclohydrolase IV family.

The catalysed reaction is GTP + H2O = 7,8-dihydroneopterin 3'-triphosphate + formate + H(+). The protein operates within cofactor biosynthesis; 7,8-dihydroneopterin triphosphate biosynthesis; 7,8-dihydroneopterin triphosphate from GTP: step 1/1. In terms of biological role, converts GTP to 7,8-dihydroneopterin triphosphate. The chain is GTP cyclohydrolase FolE2 1 from Burkholderia orbicola (strain AU 1054).